The chain runs to 116 residues: U16-barytoxin-Tl1f (116 aa).

The first 20 residues, 1–20 (MKTIIVFLSLLVLATKFGDA), serve as a signal peptide directing secretion. The propeptide occupies 21–74 (NEGVNQEQMKEVIQNEFREDFLNEMAAMSLLQQLEAIESTLLEKEADRNSRQKR). Cystine bridges form between C75/C90, C82/C95, and C89/C110. An N-linked (GlcNAc...) asparagine glycan is attached at N85.

This sequence belongs to the neurotoxin 14 (magi-1) family. 06 (ICK-Trit) subfamily. As to expression, expressed by the venom gland.

It localises to the secreted. Ion channel inhibitor. In Trittame loki (Brush-footed trapdoor spider), this protein is U16-barytoxin-Tl1f.